A 156-amino-acid polypeptide reads, in one-letter code: Snaclec A10 (156 aa).

The N-terminal stretch at 1 to 23 (MGRSISVSFGLLVVFLSLSGIGA) is a signal peptide. Cystine bridges form between Cys-27–Cys-38, Cys-55–Cys-154, and Cys-129–Cys-146. The region spanning 34–155 (YDQHCYQAVD…CGQPYRFTCE (122 aa)) is the C-type lectin domain.

It belongs to the snaclec family. Heterodimer; disulfide-linked. Expressed by the venom gland.

The protein localises to the secreted. In terms of biological role, interferes with one step of hemostasis (modulation of platelet aggregation, or coagulation cascade, for example). The chain is Snaclec A10 from Macrovipera lebetinus (Levantine viper).